We begin with the raw amino-acid sequence, 326 residues long: Protein SEH1 (326 aa).

5 WD repeats span residues 7-46, 54-95, 105-146, 224-266, and 278-317; these read TLDSGTTCSSWNQSGDRLAAGSLNGKLSIYESSTSSSSTF, VSES…AHGL, NKSS…ELKN, DKGD…DLEG, and GHQGEVWQMEWDMSGMTLASTGSDGMVKLWQSNLNGEWHE.

It belongs to the WD repeat SEC13 family. As to quaternary structure, part of the nuclear pore complex (NPC). The NPC has an eight-fold symmetrical structure comprising a central transport channel and two rings, the cytoplasmic and nuclear rings, to which eight filaments are attached. The cytoplasmic filaments have loose ends, while the nuclear filaments are joined in a distal ring, forming a nuclear basket. NPCs are highly dynamic in configuration and composition, and can be devided in 3 subcomplexes, the NUP62 subcomplex, the NUP107-160 subcomplex and the NUP93 subcomplex, containing approximately 30 different nucleoporin proteins.

It localises to the nucleus envelope. It is found in the nucleus. The protein resides in the cytoplasm. The protein localises to the nuclear pore complex. Required for proper export of mRNAs from the nucleus to the cytoplasm. This Arabidopsis thaliana (Mouse-ear cress) protein is Protein SEH1.